Reading from the N-terminus, the 981-residue chain is Anoctamin-3 (981 aa).

The segment covering 1–22 (MVHHSGSIQSFKQQKGMNISKS) has biased composition (polar residues). Positions 1 to 33 (MVHHSGSIQSFKQQKGMNISKSEITKETSLKPS) are disordered. Residues 1–403 (MVHHSGSIQS…LYFAWLGWYT (403 aa)) are Cytoplasmic-facing. A helical membrane pass occupies residues 404–424 (GMLIPAAIVGLCVFFYGLFTM). N-linked (GlcNAc...) asparagine glycans are attached at residues N425, N448, and N455. The Extracellular portion of the chain corresponds to 425–469 (NNSQVSQEICKATEVFMCPLCDKNCSLQRLNDSCIYAKVTYLFDN). Residues 470–490 (GGTVFFAIFMAIWATVFLEFW) traverse the membrane as a helical segment. The Cytoplasmic portion of the chain corresponds to 491-550 (KRRRSILTYTWDLIEWEEEEETLRPQFEAKYYKMEIVNPITGKPEPHQPSSDKVTRLLVS). A helical transmembrane segment spans residues 551–571 (VSGIFFMISLVITAVFGVVVY). The Extracellular portion of the chain corresponds to 572 to 592 (RLVVMEQFASFKWNFIKQYWQ). A helical transmembrane segment spans residues 593–613 (FATSAAAVCINFIIIMLLNLA). Residues 614–640 (YEKIAYLLTNLEYPRTESEWENSFALK) are Cytoplasmic-facing. A helical transmembrane segment spans residues 641-661 (MFLFQFVNLNSSIFYIAFFLG). The Extracellular portion of the chain corresponds to 662 to 761 (RFVGHPGKYN…MDEYLEMVLQ (100 aa)). Residues 762–782 (FGFTTIFVAAFPLAPLLALLN) traverse the membrane as a helical segment. Residues 783–810 (NIIEIRLDAYKFVTQWRRPLPARATDIG) are Cytoplasmic-facing. A helical transmembrane segment spans residues 811–831 (IWLGILEGIGILAVITNAFVI). Over 832–914 (AITSDYIPRF…QYWHILAARL (83 aa)) the chain is Extracellular. N866 carries N-linked (GlcNAc...) asparagine glycosylation. Residues 915–935 (AFIIVFEHLVFGIKSFIAYLI) traverse the membrane as a helical segment. Residues 936-981 (PDVPKGLHDRIRREKYLVQEMMYEAELEHLQQQRRKSGQPVHHEWP) lie on the Cytoplasmic side of the membrane.

It belongs to the anoctamin family. Interacts with KCNT1/Slack. As to expression, highly expressed in the forebrain striatum.

The protein resides in the cell membrane. The enzyme catalyses a 1,2-diacyl-sn-glycero-3-phosphocholine(in) = a 1,2-diacyl-sn-glycero-3-phosphocholine(out). The catalysed reaction is a beta-D-galactosyl-(1&lt;-&gt;1')-N-acylsphing-4-enine(out) = a beta-D-galactosyl-(1&lt;-&gt;1')-N-acylsphing-4-enine(in). Functionally, has calcium-dependent phospholipid scramblase activity; scrambles phosphatidylcholine and galactosylceramide. Seems to act as potassium channel regulator and may inhibit pain signaling; can facilitate KCNT1/Slack channel activity by promoting its full single-channel conductance at very low sodium concentrations and by increasing its sodium sensitivity. Does not exhibit calcium-activated chloride channel (CaCC) activity. The chain is Anoctamin-3 (ANO3) from Homo sapiens (Human).